We begin with the raw amino-acid sequence, 334 residues long: Putative carboxypeptidase VC_A0337 (334 aa).

Residue Ser112 is the Nucleophile of the active site. Catalysis depends on charge relay system residues Glu234 and His302.

It belongs to the peptidase S66 family.

The protein is Putative carboxypeptidase VC_A0337 of Vibrio cholerae serotype O1 (strain ATCC 39315 / El Tor Inaba N16961).